Reading from the N-terminus, the 104-residue chain is Flagellar hook-basal body complex protein FliE (104 aa).

It belongs to the FliE family.

The protein resides in the bacterial flagellum basal body. The chain is Flagellar hook-basal body complex protein FliE from Escherichia coli O139:H28 (strain E24377A / ETEC).